Here is a 139-residue protein sequence, read N- to C-terminus: Mitochondrial intermembrane space import and assembly protein 40-A (139 aa).

Cystine bridges form between Cys-53/Cys-55, Cys-64/Cys-97, and Cys-74/Cys-87. The CHCH domain maps to 61–105; it reads SGPCGEQFKSAFSCFHYSQEEIKGSDCLDQFRGMQECMQKYPDLY. 2 consecutive short sequence motifs (cx9C motif) follow at residues 64–74 and 87–97; these read CGEQFKSAFSC and CLDQFRGMQEC. The interval 103–139 is disordered; sequence DLYPQEDDEEEAEKEKQNKEAEPSVTQSSDTKEESSS. Basic and acidic residues predominate over residues 115-124; sequence EKEKQNKEAE.

In terms of assembly, monomer. Can form homooligomers.

The protein resides in the mitochondrion intermembrane space. Its function is as follows. Central component of a redox-sensitive mitochondrial intermembrane space import machinery which is required for the biogenesis of respiratory chain complexes. Functions as chaperone and catalyzes the formation of disulfide bonds in substrate proteins, such as COX17 or MICU1. Required for the import and folding of small cysteine-containing proteins (small Tim) in the mitochondrial intermembrane space (IMS). Precursor proteins to be imported into the IMS are translocated in their reduced form into the mitochondria. This is Mitochondrial intermembrane space import and assembly protein 40-A (chchd4-a) from Xenopus laevis (African clawed frog).